Reading from the N-terminus, the 401-residue chain is S-adenosylmethionine synthase 1 (401 aa).

Histidine 15 contributes to the ATP binding site. Position 17 (aspartate 17) interacts with Mg(2+). K(+) is bound at residue glutamate 43. The L-methionine site is built by glutamate 56 and glutamine 98. The flexible loop stretch occupies residues 98-108; the sequence is QSPDIAQGVDK. Residues 173–175, 246–247, aspartate 255, 261–262, alanine 278, and lysine 282 contribute to the ATP site; these read DGK, RF, and RK. An L-methionine-binding site is contributed by aspartate 255. An L-methionine-binding site is contributed by lysine 286.

This sequence belongs to the AdoMet synthase family. Homotetramer; dimer of dimers. Mg(2+) is required as a cofactor. The cofactor is K(+).

It localises to the cytoplasm. It catalyses the reaction L-methionine + ATP + H2O = S-adenosyl-L-methionine + phosphate + diphosphate. Its pathway is amino-acid biosynthesis; S-adenosyl-L-methionine biosynthesis; S-adenosyl-L-methionine from L-methionine: step 1/1. Catalyzes the formation of S-adenosylmethionine (AdoMet) from methionine and ATP. The overall synthetic reaction is composed of two sequential steps, AdoMet formation and the subsequent tripolyphosphate hydrolysis which occurs prior to release of AdoMet from the enzyme. This is S-adenosylmethionine synthase 1 from Frankia casuarinae (strain DSM 45818 / CECT 9043 / HFP020203 / CcI3).